The following is a 1185-amino-acid chain: Ovostatin homolog 1 (1185 aa).

A signal peptide spans 1–21 (MHVHVCVCLCVCIYTSSCVCA). Residues asparagine 80, asparagine 155, asparagine 347, asparagine 452, and asparagine 725 are each glycosylated (N-linked (GlcNAc...) asparagine).

Belongs to the protease inhibitor I39 (alpha-2-macroglobulin) family. In terms of assembly, homotetramer.

The protein resides in the secreted. Functionally, is able to inhibit all four classes of proteinases by a unique 'trapping' mechanism. This chain is Ovostatin homolog 1 (OVOS1), found in Homo sapiens (Human).